Consider the following 597-residue polypeptide: Elongation factor 4 (597 aa).

Positions 2–184 (DHIRNFSIIA…ALIAKVPPPK (183 aa)) constitute a tr-type G domain. GTP contacts are provided by residues 14-19 (DHGKST) and 131-134 (NKID).

It belongs to the TRAFAC class translation factor GTPase superfamily. Classic translation factor GTPase family. LepA subfamily.

The protein localises to the cell inner membrane. The enzyme catalyses GTP + H2O = GDP + phosphate + H(+). In terms of biological role, required for accurate and efficient protein synthesis under certain stress conditions. May act as a fidelity factor of the translation reaction, by catalyzing a one-codon backward translocation of tRNAs on improperly translocated ribosomes. Back-translocation proceeds from a post-translocation (POST) complex to a pre-translocation (PRE) complex, thus giving elongation factor G a second chance to translocate the tRNAs correctly. Binds to ribosomes in a GTP-dependent manner. This chain is Elongation factor 4, found in Burkholderia multivorans (strain ATCC 17616 / 249).